Reading from the N-terminus, the 467-residue chain is Protein indeterminate-domain 6, chloroplastic (467 aa).

The N-terminal 20 residues, 1–20 (MSSSYNTIALSSTPTFLLSS), are a transit peptide targeting the chloroplast. The tract at residues 38 to 65 (TMVQQQPTSSVAPPPKKRRNQPGNPNPD) is disordered. Over residues 39-48 (MVQQQPTSSV) the composition is skewed to polar residues. Residue S72 is modified to Phosphoserine. 2 C2H2-type zinc fingers span residues 82–104 (FLCEVCNKGFQREQNLQLHRRGH) and 123–153 (YLCPEPSCVHHDPARALGDLTGIKKHYYRKH). The C2H2-type 2; degenerate zinc-finger motif lies at 158 to 181 (WKCDKCSKRYAVQSDWKAHSKTCG). Residues C160, C163, H176, C180, C187, C189, H202, and C206 each contribute to the Zn(2+) site. The segment at 185–208 (YRCDCGTIFSRRDSYITHRAFCDA) adopts a CCHC-type 2; atypical zinc-finger fold. Positions 195-207 (RRDSYITHRAFCD) are SHR-binding. Residues 440-467 (NGRGGRSGGPPLDAEMKFSHPNHPYGKA) form a disordered region.

It is found in the plastid. The protein resides in the chloroplast. Its function is as follows. Probable transcription factor. The sequence is that of Protein indeterminate-domain 6, chloroplastic from Arabidopsis thaliana (Mouse-ear cress).